The primary structure comprises 134 residues: Cytochrome b (134 aa).

A run of 3 helical transmembrane segments spans residues 33–53 (FGSL…FLAI), 77–98 (WLLR…YLHV), and 113–133 (WNIG…GYVL). Residues H83 and H97 each coordinate heme b.

It belongs to the cytochrome b family. In terms of assembly, the cytochrome bc1 complex contains 11 subunits: 3 respiratory subunits (MT-CYB, CYC1 and UQCRFS1), 2 core proteins (UQCRC1 and UQCRC2) and 6 low-molecular weight proteins (UQCRH/QCR6, UQCRB/QCR7, UQCRQ/QCR8, UQCR10/QCR9, UQCR11/QCR10 and a cleavage product of UQCRFS1). This cytochrome bc1 complex then forms a dimer. Requires heme b as cofactor.

It localises to the mitochondrion inner membrane. In terms of biological role, component of the ubiquinol-cytochrome c reductase complex (complex III or cytochrome b-c1 complex) that is part of the mitochondrial respiratory chain. The b-c1 complex mediates electron transfer from ubiquinol to cytochrome c. Contributes to the generation of a proton gradient across the mitochondrial membrane that is then used for ATP synthesis. This chain is Cytochrome b (MT-CYB), found in Platyrrhinus helleri (Heller's broad-nosed bat).